The following is a 185-amino-acid chain: UPF0301 protein Tbd_2579 (185 aa).

The protein belongs to the UPF0301 (AlgH) family.

The chain is UPF0301 protein Tbd_2579 from Thiobacillus denitrificans (strain ATCC 25259 / T1).